The primary structure comprises 59 residues: Protein translocase subunit SecE (59 aa).

The helical transmembrane segment at 30–50 threads the bilayer; sequence ITVISTVIFFVIFFALLDTGI.

It belongs to the SecE/SEC61-gamma family. In terms of assembly, component of the Sec protein translocase complex. Heterotrimer consisting of SecY, SecE and SecG subunits. The heterotrimers can form oligomers, although 1 heterotrimer is thought to be able to translocate proteins. Interacts with the ribosome. Interacts with SecDF, and other proteins may be involved. Interacts with SecA.

It is found in the cell membrane. Its function is as follows. Essential subunit of the Sec protein translocation channel SecYEG. Clamps together the 2 halves of SecY. May contact the channel plug during translocation. The protein is Protein translocase subunit SecE of Bacillus subtilis (strain 168).